The primary structure comprises 417 residues: uncharacterized protein (417 aa).

The interval 1–24 (MSQPPINPLGQPQVPAAASPSGQP) is disordered. 4 consecutive transmembrane segments (helical) span residues 54 to 74 (VYDT…LLTA), 79 to 99 (LMLY…TLLI), 117 to 137 (AIVV…GAFV), and 143 to 163 (MLVF…LYFM). The segment covering 211–228 (DLSASARMEEHEASQRQD) has biased composition (basic and acidic residues). Disordered regions lie at residues 211–283 (DLSA…FKDD) and 308–417 (IMPA…RKNK). Over residues 312-322 (SSRSPNFSTGT) the composition is skewed to polar residues. A compositionally biased stretch (low complexity) spans 336 to 347 (EPSIPRVSSSSR). The span at 391 to 401 (STANLSPSNPF) shows a compositional bias: polar residues.

The protein belongs to the chlamydial CPn_0443/CT_005/TC_0273 family.

It is found in the cell membrane. This is an uncharacterized protein from Chlamydia pneumoniae (Chlamydophila pneumoniae).